The primary structure comprises 478 residues: MSQLLTARQAEELHKAMIAYLLSANLPKSAAALREELADSVQLDDSTAKKYEGLLEKKWTSVVRLQKKIMDLESRNNALQSELDSATPTSLARRNQDPVSWLPHAPARHILQSHREPVTCVGFHPVFSSLASGSDDTTIKIWDWELGELERTIKGHTKAVLDVDYGGPRGGTLLASCSSDLTIKLWDPSDGYKNIRTLPGHDHSVSAVRFIPSGAAGSPLSGNLLVSASRDKTLRIWDVTTGYCVKTLRGHVDWVRDVAASPDGRFLFSAGNDQVARLWDVSSGETKSTFLGHEHAVECVAFAPPTSYPHLSALAGLKKAPPSSSSAEYVATGSRDKSIRIWDARGTLIKTLIGHDNWVRALAFHPGGKYLLSVSDDKTLRCWDLTQECKCVRTVKDAHGHFISCIRWAPNIIKDAGVVNGDDTSTAASANGGALAASAINGVVPTGKKEDPGGGPMMGIRCVIATGSVDLKVRVFAS.

The LisH domain occupies 9-41; it reads QAEELHKAMIAYLLSANLPKSAAALREELADSV. The stretch at 60–87 forms a coiled coil; it reads TSVVRLQKKIMDLESRNNALQSELDSAT. WD repeat units lie at residues 113–154, 156–196, 200–247, 250–289, 292–352, 354–393, 398–439, and 440–477; these read SHRE…RTIK, HTKA…KNIR, GHDH…CVKT, GHVD…TKST, GHEH…IKTL, GHDN…KCVR, AHGH…AASA, and INGV…RVFA.

Belongs to the WD repeat LIS1/nudF family. In terms of assembly, self-associates. Interacts with NDL1 and dynein.

It is found in the cytoplasm. It localises to the cytoskeleton. The protein localises to the spindle pole. Its function is as follows. Positively regulates the activity of the minus-end directed microtubule motor protein dynein. May enhance dynein-mediated microtubule sliding by targeting dynein to the microtubule plus end. Required for nuclear migration during vegetative growth as well as development. Required for retrograde early endosome (EE) transport from the hyphal tip. Required for localization of dynein to the mitotic spindle poles. Recruits additional proteins to the dynein complex at SPBs. In Paracoccidioides brasiliensis (strain Pb18), this protein is Nuclear distribution protein PAC1.